Reading from the N-terminus, the 110-residue chain is MEVLAKHRFARTSAQKARLVADQIRGLPVAKALEILTFSPKKAAVLVKKVLDSAIANAEHNEGADIDELKVGAVFVDEGPTMKRIMPRAKGRADRIMKRTSHITVVVSDR.

It belongs to the universal ribosomal protein uL22 family. As to quaternary structure, part of the 50S ribosomal subunit.

Its function is as follows. This protein binds specifically to 23S rRNA; its binding is stimulated by other ribosomal proteins, e.g. L4, L17, and L20. It is important during the early stages of 50S assembly. It makes multiple contacts with different domains of the 23S rRNA in the assembled 50S subunit and ribosome. In terms of biological role, the globular domain of the protein is located near the polypeptide exit tunnel on the outside of the subunit, while an extended beta-hairpin is found that lines the wall of the exit tunnel in the center of the 70S ribosome. In Shewanella baltica (strain OS223), this protein is Large ribosomal subunit protein uL22.